The sequence spans 542 residues: Chaperonin GroEL (542 aa).

ATP-binding positions include 29–32, Lys-50, 86–90, Gly-414, 477–479, and Asp-493; these read TMGP, DGTTT, and NAA.

This sequence belongs to the chaperonin (HSP60) family. In terms of assembly, forms a cylinder of 14 subunits composed of two heptameric rings stacked back-to-back. Interacts with the co-chaperonin GroES.

The protein localises to the cytoplasm. The catalysed reaction is ATP + H2O + a folded polypeptide = ADP + phosphate + an unfolded polypeptide.. In terms of biological role, together with its co-chaperonin GroES, plays an essential role in assisting protein folding. The GroEL-GroES system forms a nano-cage that allows encapsulation of the non-native substrate proteins and provides a physical environment optimized to promote and accelerate protein folding. In Sulfurimonas denitrificans (strain ATCC 33889 / DSM 1251) (Thiomicrospira denitrificans (strain ATCC 33889 / DSM 1251)), this protein is Chaperonin GroEL.